The primary structure comprises 450 residues: Glycerol dehydrogenase 1 (450 aa).

NAD(+)-binding positions include D99, 155-159 (GKTMD), and 177-180 (TTAS). D182 provides a ligand contact to substrate. NAD(+) contacts are provided by S186, L188, and Y192. Substrate-binding residues include D232, H315, and H333. The Zn(2+) site is built by D232, H315, and H333.

The protein belongs to the iron-containing alcohol dehydrogenase family. The cofactor is Zn(2+).

Its subcellular location is the mitochondrion. The enzyme catalyses glycerol + NAD(+) = dihydroxyacetone + NADH + H(+). The protein operates within polyol metabolism; glycerol fermentation; glycerone phosphate from glycerol (oxidative route): step 1/2. Functionally, glycerol dehydrogenase involved in the assimilation of glycerol. The polypeptide is Glycerol dehydrogenase 1 (gld1) (Schizosaccharomyces pombe (strain 972 / ATCC 24843) (Fission yeast)).